The primary structure comprises 52 residues: MGSFLEVLCAIFIPPVGVFLRYGLGLEFWVCLLLTLFAFIPGLIYAIYVLTK.

Transmembrane regions (helical) follow at residues 4–24 (FLEV…RYGL) and 30–50 (VCLL…IYVL).

It belongs to the UPF0057 (PMP3) family.

It localises to the membrane. This is UPF0057 membrane protein At1g57550 from Arabidopsis thaliana (Mouse-ear cress).